Reading from the N-terminus, the 294-residue chain is Phosphoribosylaminoimidazole-succinocarboxamide synthase (294 aa).

The protein belongs to the SAICAR synthetase family.

It catalyses the reaction 5-amino-1-(5-phospho-D-ribosyl)imidazole-4-carboxylate + L-aspartate + ATP = (2S)-2-[5-amino-1-(5-phospho-beta-D-ribosyl)imidazole-4-carboxamido]succinate + ADP + phosphate + 2 H(+). It functions in the pathway purine metabolism; IMP biosynthesis via de novo pathway; 5-amino-1-(5-phospho-D-ribosyl)imidazole-4-carboxamide from 5-amino-1-(5-phospho-D-ribosyl)imidazole-4-carboxylate: step 1/2. This Rhodococcus opacus (strain B4) protein is Phosphoribosylaminoimidazole-succinocarboxamide synthase.